Here is a 206-residue protein sequence, read N- to C-terminus: Proteasome subunit beta 1 (206 aa).

Residues 1–14 constitute a propeptide, removed in mature form; by autocatalysis; that stretch reads MSRIHNDPKVLLTG. T15 serves as the catalytic Nucleophile.

Belongs to the peptidase T1B family. In terms of assembly, the 20S proteasome core is composed of 14 alpha and 14 beta subunits that assemble into four stacked heptameric rings, resulting in a barrel-shaped structure. The two inner rings, each composed of seven catalytic beta subunits, are sandwiched by two outer rings, each composed of seven alpha subunits. The catalytic chamber with the active sites is on the inside of the barrel. Has a gated structure, the ends of the cylinder being occluded by the N-termini of the alpha-subunits. Is capped at one or both ends by the proteasome regulatory ATPase, PAN.

The protein localises to the cytoplasm. The catalysed reaction is Cleavage of peptide bonds with very broad specificity.. With respect to regulation, the formation of the proteasomal ATPase PAN-20S proteasome complex, via the docking of the C-termini of PAN into the intersubunit pockets in the alpha-rings, triggers opening of the gate for substrate entry. Interconversion between the open-gate and close-gate conformations leads to a dynamic regulation of the 20S proteasome proteolysis activity. Functionally, component of the proteasome core, a large protease complex with broad specificity involved in protein degradation. The chain is Proteasome subunit beta 1 from Caldivirga maquilingensis (strain ATCC 700844 / DSM 13496 / JCM 10307 / IC-167).